Consider the following 94-residue polypeptide: Integration host factor subunit beta (94 aa).

Belongs to the bacterial histone-like protein family. In terms of assembly, heterodimer of an alpha and a beta chain.

In terms of biological role, this protein is one of the two subunits of integration host factor, a specific DNA-binding protein that functions in genetic recombination as well as in transcriptional and translational control. This Sodalis glossinidius (strain morsitans) protein is Integration host factor subunit beta.